We begin with the raw amino-acid sequence, 289 residues long: Delta-sarcoglycan (289 aa).

The Cytoplasmic portion of the chain corresponds to 1–35 (MPQEQYTHHRSTMPGSVGPQVYKVGIYGWRKRCLY). A helical; Signal-anchor for type II membrane protein membrane pass occupies residues 36–56 (FFVLLLMILILVNLAMTIWIL). The Extracellular segment spans residues 57–289 (KVMNFTIDGM…TCQINTSVCL (233 aa)). N-linked (GlcNAc...) asparagine glycans are attached at residues Asn60 and Asn108. 2 cysteine pairs are disulfide-bonded: Cys263-Cys288 and Cys265-Cys281. Asn284 carries an N-linked (GlcNAc...) asparagine glycan.

This sequence belongs to the sarcoglycan beta/delta/gamma/zeta family. Interacts with FLNC and DAG1. Cross-link to form 2 major subcomplexes: one consisting of SGCB, SGCD and SGCG and the other consisting of SGCB and SGCD. The association between SGCB and SGCG is particularly strong while SGCA is loosely associated with the other sarcoglycans. Glycosylated. In terms of processing, disulfide bonds are present. As to expression, most strongly expressed in skeletal and cardiac muscle. Also detected in smooth muscle. Weak expression in brain and lung.

It is found in the cell membrane. The protein resides in the sarcolemma. It localises to the cytoplasm. The protein localises to the cytoskeleton. Functionally, component of the sarcoglycan complex, a subcomplex of the dystrophin-glycoprotein complex which forms a link between the F-actin cytoskeleton and the extracellular matrix. The chain is Delta-sarcoglycan (SGCD) from Homo sapiens (Human).